The following is a 363-amino-acid chain: Probable butyrate kinase (363 aa).

It belongs to the acetokinase family.

Its subcellular location is the cytoplasm. It carries out the reaction butanoate + ATP = butanoyl phosphate + ADP. The chain is Probable butyrate kinase from Maridesulfovibrio salexigens (strain ATCC 14822 / DSM 2638 / NCIMB 8403 / VKM B-1763) (Desulfovibrio salexigens).